A 109-amino-acid polypeptide reads, in one-letter code: Envelope small membrane protein (109 aa).

Topologically, residues 1–11 (MTNLLNKSLEE) are virion surface. A helical membrane pass occupies residues 12-32 (NGSFLTAVYIFVGFVALYLLG). At 33–109 (RALQAFVQAA…QDVQRNKLYS (77 aa)) the chain is on the intravirion side. The disordered stretch occupies residues 89–109 (NGWNNKNPANFQDVQRNKLYS). The span at 90–109 (GWNNKNPANFQDVQRNKLYS) shows a compositional bias: polar residues.

It belongs to the gammacoronaviruses E protein family. Homooligomer. Interacts with the M membrane protein in the budding compartment of the host cell, which is located between endoplasmic reticulum and the Golgi complex. The cytoplasmic tails of both proteins are important for this function. Interacts with Nucleoprotein.

Its subcellular location is the host Golgi apparatus membrane. In terms of biological role, plays a central role in virus morphogenesis and assembly. Acts as a viroporin and self-assembles in host membranes forming pentameric protein-lipid pores that allow ion transport. Also plays a role in the induction of apoptosis. The protein is Envelope small membrane protein of Avian infectious bronchitis virus (strain KB8523) (IBV).